Consider the following 518-residue polypeptide: uncharacterized protein (518 aa).

The first 21 residues, 1-21 (MWKWKVILLFLAEMFVSGVNG), serve as a signal peptide directing secretion. 7 N-linked (GlcNAc...) asparagine glycosylation sites follow: Asn-30, Asn-142, Asn-295, Asn-342, Asn-362, Asn-410, and Asn-503. The CUB domain maps to 389–517 (CPPFGITNSV…RGFWVSITPQ (129 aa)).

Its subcellular location is the secreted. This is an uncharacterized protein from Caenorhabditis elegans.